We begin with the raw amino-acid sequence, 1469 residues long: WASH complex subunit 2 (1469 aa).

S136 is modified (phosphoserine). 2 disordered regions span residues 178–349 (YDSK…RMPV) and 367–546 (KVQS…RVAG). Basic and acidic residues predominate over residues 197-206 (SDEKEPETKK). S227 bears the Phosphoserine mark. Composition is skewed to low complexity over residues 276–293 (SPPS…TSSP) and 306–316 (STASLSSSSSS). Positions 351–372 (LFNEDEFKSFMSEIVDKVQSKT) match the LFa 1 motif. Over residues 370-385 (SKTPSSSVSPATTIST) the composition is skewed to polar residues. The span at 387–399 (EPPKTKKPVEEYP) shows a compositional bias: basic and acidic residues. A phosphoserine mark is found at S422 and S426. Acidic residues predominate over residues 519 to 528 (FDDDDLDIDD). The LFa 5 motif lies at 550–563 (LFEDDDQDDVTDLF). The segment at 571 to 591 (IPKETSSGVSPNKNVETPVAS) is disordered. Positions 574–585 (ETSSGVSPNKNV) are enriched in polar residues. At S580 the chain carries Phosphoserine. A Phosphothreonine modification is found at T587. The LFa 6 signature appears at 595 to 605 (LFDDIEDEDLF). 3 disordered regions span residues 607-760 (TPKA…TDLF), 933-1254 (ALPN…KLFS), and 1316-1469 (VTTA…LDFK). Composition is skewed to basic and acidic residues over residues 626-649 (GEDK…EKQH) and 671-687 (TEQK…KDDT). The residue at position 693 (T693) is a Phosphothreonine. An LFa 8 motif is present at residues 698–709 (LFSEDLTDDELF). 3 stretches are compositionally biased toward polar residues: residues 709 to 728 (FSST…TNEF), 735 to 745 (YTSQTEENVSP), and 938 to 956 (PSAT…SVSS). 3 stretches are compositionally biased toward basic and acidic residues: residues 971–990 (DNDH…KDEL), 1031–1042 (ETDRSEVKETPE), and 1077–1089 (RKQE…RDEP). Over residues 1091–1109 (ATVQTEAEAPSSGQNTVSS) the composition is skewed to polar residues. Positions 1118–1136 (NKSRARGPAKRRPSTRRGR) are enriched in basic residues. The span at 1159–1170 (DSPEVEHSERSS) shows a compositional bias: basic and acidic residues. 7 positions are modified to phosphoserine: S1241, S1245, S1254, S1344, S1380, S1381, and S1408. 2 stretches are compositionally biased toward low complexity: residues 1417-1426 (FGGSSTSKAA) and 1434-1452 (AART…PTAT).

The protein belongs to the FAM21 family. In terms of assembly, component of the WASH complex.

Acts at least in part as component of the WASH complex which may regulate wash nucleation-promoting factor (NPF) activity and is required for its membrane targeting during endosomal sorting. This Drosophila melanogaster (Fruit fly) protein is WASH complex subunit 2.